The primary structure comprises 461 residues: Steroidogenic factor 1 (461 aa).

The nuclear receptor DNA-binding region spans 10–85 (DELCPVCGDK…VGMRLEAVRA (76 aa)). Residues 13 to 33 (CPVCGDKVSGYHYGLLTCESC) form an NR C4-type zinc finger. N6-acetyllysine is present on residues lysine 34, lysine 38, and lysine 72. The NR C4-type zinc finger occupies 49–73 (CTESQSCKIDKTQRKRCPFCRFQKC). Residues 116 to 158 (NGFKLETGPPVGVPPPPPPPPDYMLPHGLHASEPKGLASGPPA) are disordered. Lysine 119 participates in a covalent cross-link: Glycyl lysine isopeptide (Lys-Gly) (interchain with G-Cter in SUMO). Residues 126 to 138 (VGVPPPPPPPPDY) are compositionally biased toward pro residues. Lysine 194 participates in a covalent cross-link: Glycyl lysine isopeptide (Lys-Gly) (interchain with G-Cter in SUMO). The residue at position 203 (serine 203) is a Phosphoserine; by CDK7. Residues 222-459 (GVPELILQLL…NLLIEMLQAK (238 aa)) form the NR LBD domain. Residues 230–461 (LLQLEPDEDQ…LIEMLQAKQT (232 aa)) form an important for dimerization region. A 1,2-diacyl-sn-glycero-3-phosphocholine-binding residues include glycine 341, tyrosine 436, and lysine 440.

The protein belongs to the nuclear hormone receptor family. NR5 subfamily. Binds DNA as a monomer. Part of a complex consisting of SFPQ, NONO and NR5A1. Interacts with NR0B2. Interacts with DGKQ and CDK7. Binds to and activated by HIPK3. May be regulated by phosphorylation and dephosphorylation. Post-translationally, acetylation stimulates the transcriptional activity. In terms of processing, sumoylation reduces CDK7-mediated phosphorylation on Ser-203. Phosphorylated on Ser-203 by CDK7. This phosphorylation promotes transcriptional activity. As to expression, adrenal, ovary, testis, placenta, adipocyte, and brain.

The protein localises to the nucleus. Its function is as follows. Transcriptional activator. Seems to be essential for sexual differentiation and formation of the primary steroidogenic tissues. Binds to the Ad4 site found in the promoter region of steroidogenic P450 genes such as CYP11A, CYP11B and CYP21B. Also regulates the AMH/Muellerian inhibiting substance gene as well as the AHCH and STAR genes. 5'-YCAAGGYC-3' and 5'-RRAGGTCA-3' are the consensus sequences for the recognition by NR5A1. The SFPQ-NONO-NR5A1 complex binds to the CYP17 promoter and regulates basal and cAMP-dependent transcriptional activity. Binds phospholipids with a phosphatidylinositol (PI) headgroup, in particular PI(3,4)P2 and PI(3,4,5)P3. Activated by the phosphorylation of NR5A1 by HIPK3 leading to increased steroidogenic gene expression upon cAMP signaling pathway stimulation. The chain is Steroidogenic factor 1 (NR5A1) from Bos taurus (Bovine).